Here is a 540-residue protein sequence, read N- to C-terminus: MMGSPVSHLLAGFCVWVVLGWVGGSVPNLGPAEQEQNHYLAQLFGLYGENGTLTAGGLARLLHSLGLGRVQGLRLGQHGPLTGRAASPAADNSTHRPQNPELSVDVWAGMPLGPSGWGDLEESKAPHLPRGPAPSGLDLLHRLLLLDHSLADHLNEDCLNGSQLLVNFGLSPAAPLTPRQFALLCPALLYQIDSRVCIGAPAPAPPGDLLSALLQSALAVLLLSLPSPLSLLLLRLLGPRLLRPLLGFLGALAVGTLCGDALLHLLPHAQEGRHAGPGGLPEKDLGPGLSVLGGLFLLFVLENMLGLLRHRGLRPRCCRRKRRNLETRNLDPENGSGMALQPLQAAPEPGAQGQREKNSQHPPALAPPGHQGHSHGHQGGTDITWMVLLGDGLHNLTDGLAIGAAFSDGFSSGLSTTLAVFCHELPHELGDFAMLLQSGLSFRRLLLLSLVSGALGLGGAVLGVGLSLGPVPLTPWVFGVTAGVFLYVALVDMLPALLRPPEPLPTPHVLLQGLGLLLGGGLMLAITLLEERLLPVTTEG.

The N-terminal stretch at 1-20 (MMGSPVSHLLAGFCVWVVLG) is a signal peptide. The Extracellular portion of the chain corresponds to 21 to 212 (WVGGSVPNLG…PAPPGDLLSA (192 aa)). The N-linked (GlcNAc...) asparagine glycan is linked to N50. Residues 78 to 101 (HGPLTGRAASPAADNSTHRPQNPE) are disordered. Positions 90-101 (ADNSTHRPQNPE) are enriched in polar residues. Residue N160 is glycosylated (N-linked (GlcNAc...) asparagine). Residues 213 to 233 (LLQSALAVLLLSLPSPLSLLL) traverse the membrane as a helical segment. Over 234–244 (LRLLGPRLLRP) the chain is Cytoplasmic. The chain crosses the membrane as a helical span at residues 245-265 (LLGFLGALAVGTLCGDALLHL). The Extracellular portion of the chain corresponds to 266 to 287 (LPHAQEGRHAGPGGLPEKDLGP). A helical transmembrane segment spans residues 288–308 (GLSVLGGLFLLFVLENMLGLL). The Cytoplasmic segment spans residues 309-444 (RHRGLRPRCC…LLQSGLSFRR (136 aa)). Residues 324-377 (NLETRNLDPENGSGMALQPLQAAPEPGAQGQREKNSQHPPALAPPGHQGHSHGH) are disordered. S336 is modified (phosphoserine). H375 carries the post-translational modification Pros-methylhistidine. The helical transmembrane segment at 445–465 (LLLLSLVSGALGLGGAVLGVG) threads the bilayer. Residues 466 to 470 (LSLGP) lie on the Extracellular side of the membrane. The chain crosses the membrane as a helical span at residues 471–491 (VPLTPWVFGVTAGVFLYVALV). Residues 492-508 (DMLPALLRPPEPLPTPH) are Cytoplasmic-facing. The chain crosses the membrane as a helical span at residues 509 to 529 (VLLQGLGLLLGGGLMLAITLL). The Extracellular portion of the chain corresponds to 530-540 (EERLLPVTTEG).

The protein belongs to the ZIP transporter (TC 2.A.5) family. Homodimer. Post-translationally, methylated at His-375 by METTL9. In terms of processing, N-Glycosylated. As to expression, expressed in liver, kidney, pancreas, small intestine, colon, spleen, fetal liver and fetal kidney.

It localises to the basolateral cell membrane. The catalysed reaction is Zn(2+)(in) = Zn(2+)(out). Its function is as follows. Uniporter that transports zinc(2+) into polarized cells of enterocytes, pancreatic acinar and endoderm cells across the basolateral membrane and participates, notably, in zinc excretion from the intestine by the uptake of zinc from the blood into the intestine. The transport mechanism is temperature- and concentration-dependent and saturable. In addition, is also a high affinity copper transporter in vitro. Also may regulate glucose-stimulated insulin secretion (GSIS) in islets primarily through the zinc-activated SIRT1-PPARGC1A axis. Could regulate the BMP/TGF-beta (bone morphogenetic protein/transforming growth factor-beta) signaling pathway and modulates extracellular matrix (ECM) proteins of the sclera. Plays a role in eye development. The protein is Zinc transporter ZIP5 of Homo sapiens (Human).